A 131-amino-acid polypeptide reads, in one-letter code: uncharacterized protein (131 aa).

This is an uncharacterized protein from Schizosaccharomyces pombe (strain 972 / ATCC 24843) (Fission yeast).